A 229-amino-acid chain; its full sequence is Demethylmenaquinone methyltransferase (229 aa).

S-adenosyl-L-methionine is bound by residues Thr-62, Asp-80, 100–101 (DG), and Ser-117.

The protein belongs to the class I-like SAM-binding methyltransferase superfamily. MenG/UbiE family.

It carries out the reaction a 2-demethylmenaquinol + S-adenosyl-L-methionine = a menaquinol + S-adenosyl-L-homocysteine + H(+). It functions in the pathway quinol/quinone metabolism; menaquinone biosynthesis; menaquinol from 1,4-dihydroxy-2-naphthoate: step 2/2. Its function is as follows. Methyltransferase required for the conversion of demethylmenaquinol (DMKH2) to menaquinol (MKH2). The sequence is that of Demethylmenaquinone methyltransferase from Corynebacterium kroppenstedtii (strain DSM 44385 / JCM 11950 / CIP 105744 / CCUG 35717).